A 701-amino-acid chain; its full sequence is Elongation factor G (701 aa).

In terms of domain architecture, tr-type G spans Asn10–Leu286. GTP-binding positions include Ala19–Thr26, Asp83–His87, and Asn137–Asp140.

This sequence belongs to the TRAFAC class translation factor GTPase superfamily. Classic translation factor GTPase family. EF-G/EF-2 subfamily.

It is found in the cytoplasm. Its function is as follows. Catalyzes the GTP-dependent ribosomal translocation step during translation elongation. During this step, the ribosome changes from the pre-translocational (PRE) to the post-translocational (POST) state as the newly formed A-site-bound peptidyl-tRNA and P-site-bound deacylated tRNA move to the P and E sites, respectively. Catalyzes the coordinated movement of the two tRNA molecules, the mRNA and conformational changes in the ribosome. The sequence is that of Elongation factor G from Mycobacteroides abscessus (strain ATCC 19977 / DSM 44196 / CCUG 20993 / CIP 104536 / JCM 13569 / NCTC 13031 / TMC 1543 / L948) (Mycobacterium abscessus).